Consider the following 755-residue polypeptide: Tryptophan 2-monooxygenase (755 aa).

Residues Ser-247, Glu-267, Lys-275, and Arg-295 each contribute to the FMN site. Residue Arg-295 participates in substrate binding.

The protein belongs to the tryptophan 2-monooxygenase family. FMN is required as a cofactor.

The catalysed reaction is L-tryptophan + O2 = indole-3-acetamide + CO2 + H2O. The protein operates within plant hormone metabolism; auxin biosynthesis. This is Tryptophan 2-monooxygenase (tms1) from Rhizobium radiobacter (Agrobacterium tumefaciens).